The primary structure comprises 244 residues: ATP synthase subunit a (244 aa).

5 helical membrane passes run 17–37 (LTNI…AILT), 75–95 (FLAL…LGLP), 112–132 (DPAI…YYGV), 170–190 (LYGN…LATS), and 221–241 (GAIQ…HKIS).

The protein belongs to the ATPase A chain family. As to quaternary structure, F-type ATPases have 2 components, CF(1) - the catalytic core - and CF(0) - the membrane proton channel. CF(1) has five subunits: alpha(3), beta(3), gamma(1), delta(1), epsilon(1). CF(0) has three main subunits: a(1), b(2) and c(9-12). The alpha and beta chains form an alternating ring which encloses part of the gamma chain. CF(1) is attached to CF(0) by a central stalk formed by the gamma and epsilon chains, while a peripheral stalk is formed by the delta and b chains. The F(1)F(0) complex interacts with SpoIIIJ and YqjG; YqgA is found in the same complex.

Its subcellular location is the cell membrane. Key component of the proton channel; it plays a direct role in the translocation of protons across the membrane. The chain is ATP synthase subunit a from Bacillus subtilis (strain 168).